The primary structure comprises 920 residues: 2-oxoglutarate dehydrogenase E1 component (920 aa).

This sequence belongs to the alpha-ketoglutarate dehydrogenase family. As to quaternary structure, homodimer. Part of the 2-oxoglutarate dehydrogenase (OGDH) complex composed of E1 (2-oxoglutarate dehydrogenase), E2 (dihydrolipoamide succinyltransferase) and E3 (dihydrolipoamide dehydrogenase); the complex contains multiple copies of the three enzymatic components (E1, E2 and E3). Thiamine diphosphate is required as a cofactor.

The catalysed reaction is N(6)-[(R)-lipoyl]-L-lysyl-[protein] + 2-oxoglutarate + H(+) = N(6)-[(R)-S(8)-succinyldihydrolipoyl]-L-lysyl-[protein] + CO2. Its function is as follows. E1 component of the 2-oxoglutarate dehydrogenase (OGDH) complex which catalyzes the decarboxylation of 2-oxoglutarate, the first step in the conversion of 2-oxoglutarate to succinyl-CoA and CO(2). This chain is 2-oxoglutarate dehydrogenase E1 component, found in Leptospira interrogans serogroup Icterohaemorrhagiae serovar copenhageni (strain Fiocruz L1-130).